The chain runs to 164 residues: NADH-quinone oxidoreductase subunit I 1 (164 aa).

4Fe-4S ferredoxin-type domains are found at residues 54–84 (LRRY…IEAG) and 95–124 (VRYD…EGPN). 8 residues coordinate [4Fe-4S] cluster: cysteine 64, cysteine 67, cysteine 70, cysteine 74, cysteine 104, cysteine 107, cysteine 110, and cysteine 114.

Belongs to the complex I 23 kDa subunit family. As to quaternary structure, NDH-1 is composed of 14 different subunits. Subunits NuoA, H, J, K, L, M, N constitute the membrane sector of the complex. [4Fe-4S] cluster serves as cofactor.

It localises to the cell inner membrane. The enzyme catalyses a quinone + NADH + 5 H(+)(in) = a quinol + NAD(+) + 4 H(+)(out). NDH-1 shuttles electrons from NADH, via FMN and iron-sulfur (Fe-S) centers, to quinones in the respiratory chain. The immediate electron acceptor for the enzyme in this species is believed to be ubiquinone. Couples the redox reaction to proton translocation (for every two electrons transferred, four hydrogen ions are translocated across the cytoplasmic membrane), and thus conserves the redox energy in a proton gradient. The sequence is that of NADH-quinone oxidoreductase subunit I 1 from Rhizobium meliloti (strain 1021) (Ensifer meliloti).